Consider the following 1291-residue polypeptide: Histone-lysine N-methyltransferase SETDB1 (1291 aa).

Positions Glu-18 to Leu-64 form a coiled coil. Residues Arg-108–Asp-147 form a disordered region. Phosphoserine is present on residues Ser-112 and Ser-117. Thr-120 is modified (phosphothreonine). The segment covering Glu-124 to Leu-133 has biased composition (acidic residues). Lys-182 is covalently cross-linked (Glycyl lysine isopeptide (Lys-Gly) (interchain with G-Cter in SUMO2); alternate). Lys-182 is covalently cross-linked (Glycyl lysine isopeptide (Lys-Gly) (interchain with G-Cter in ubiquitin); alternate). Tudor domains are found at residues Lys-257–Thr-320 and Leu-347–Thr-403. The disordered stretch occupies residues Ser-404–Pro-545. A compositionally biased stretch (polar residues) spans Gln-433 to Gln-444. Residues Val-448 to Ser-468 are compositionally biased toward pro residues. The segment covering Glu-477–Val-515 has biased composition (polar residues). Residues Ser-528–Pro-539 are compositionally biased toward low complexity. Residues Tyr-594–Leu-665 form the MBD domain. The Pre-SET domain maps to Val-727 to Gly-800. Zn(2+)-binding residues include Cys-729, Cys-731, Cys-735, Cys-741, Cys-743, Cys-781, Cys-785, Cys-787, and Cys-792. The 464-residue stretch at Val-803–Asn-1266 folds into the SET domain. Residues Lys-813 to Trp-815, Asp-851, and Tyr-853 contribute to the S-adenosyl-L-methionine site. Residue Lys-867 forms a Glycyl lysine isopeptide (Lys-Gly) (interchain with G-Cter in ubiquitin) linkage. The disordered stretch occupies residues Glu-868–Ala-1160. A compositionally biased stretch (acidic residues) spans Glu-896–Asp-907. The segment covering Asp-951–Ile-963 has biased composition (pro residues). At Ser-1025 the chain carries Phosphoserine. The segment covering Ile-1031 to Lys-1050 has biased composition (basic and acidic residues). Residue Lys-1032 forms a Glycyl lysine isopeptide (Lys-Gly) (interchain with G-Cter in SUMO2); alternate linkage. Lys-1032 participates in a covalent cross-link: Glycyl lysine isopeptide (Lys-Gly) (interchain with G-Cter in SUMO1); alternate. Lys-1038 participates in a covalent cross-link: Glycyl lysine isopeptide (Lys-Gly) (interchain with G-Cter in SUMO2). Over residues Ser-1052 to Tyr-1063 the composition is skewed to polar residues. A Phosphoserine modification is found at Ser-1066. Residue Lys-1069 forms a Glycyl lysine isopeptide (Lys-Gly) (interchain with G-Cter in SUMO2) linkage. The segment covering Leu-1100–Ser-1115 has biased composition (low complexity). Polar residues predominate over residues Arg-1116 to Ser-1140. Lys-1149 is covalently cross-linked (Glycyl lysine isopeptide (Lys-Gly) (interchain with G-Cter in SUMO2)). Residues Lys-1170 and Lys-1178 each carry the N6,N6,N6-trimethyllysine; alternate modification. An N6,N6-dimethyllysine; alternate mark is found at Lys-1170 and Lys-1178. Residues Arg-1220 and Asn-1223 to His-1224 contribute to the S-adenosyl-L-methionine site. Residues Cys-1226, Cys-1279, Cys-1281, and Cys-1286 each coordinate Zn(2+). Residues Lys-1275–Leu-1291 form the Post-SET domain.

This sequence belongs to the class V-like SAM-binding methyltransferase superfamily. Histone-lysine methyltransferase family. Suvar3-9 subfamily. Part of a complex containing at least CDYL, REST, WIZ, SETDB1, EHMT1 and EHMT2. Forms a complex with ATRX, TRIM28 and ZNF274. Probably part of a corepressor complex containing ZNF304, TRIM28, SETDB1 and DNMT1. Interacts with TRIM28/TIF1B. Interacts with ATF7IP and ATF7IP2; the interaction with ATF7IP protects SETDB1 from proteasomal degradation and is required to stimulate histone methyltransferase activity and facilitate the conversion of dimethylated to trimethylated H3 'Lys-9'. Interacts with CBX1 and CBX5. Interacts with DNMT3A and DNMT3B. Interacts with SUMO2. Interacts with MPHOSPH8. Interacts with ERG. Interacts with HDAC1, HDAC2, SIN3A and SIN3B. Interacts with ATRX. Interacts with RESF1. Interacts with ZNF638. Interacts with TASOR. Interacts with ZNF263; recruited to the SIX3 promoter along with other proteins involved in chromatin modification and transcriptional corepression where it contributes to transcriptional repression. Interacts with PHF13; the interaction probably enhances SETDB1 chromatin-associated levels and activity. Interacts with VRK1. In terms of processing, degraded by the proteasome, shielded by interaction with ATF7IP. Post-translationally, monoubiquitinated at Lys-867 by E2 enzymes of the UBE2E family. The conjugated-Ub is protected from deubiquitination by the SET domain. Monoubiquitination at Lys-867 is required for catalytic activity, H3K9 methylation and endogenous retrovirus silencing. Widely expressed. High expression in testis.

Its subcellular location is the nucleus. The protein resides in the cytoplasm. It localises to the chromosome. The catalysed reaction is N(6),N(6)-dimethyl-L-lysyl(9)-[histone H3] + S-adenosyl-L-methionine = N(6),N(6),N(6)-trimethyl-L-lysyl(9)-[histone H3] + S-adenosyl-L-homocysteine + H(+). Histone methyltransferase that specifically trimethylates 'Lys-9' of histone H3. H3 'Lys-9' trimethylation represents a specific tag for epigenetic transcriptional repression by recruiting HP1 (CBX1, CBX3 and/or CBX5) proteins to methylated histones. Mainly functions in euchromatin regions, thereby playing a central role in the silencing of euchromatic genes. H3 'Lys-9' trimethylation is coordinated with DNA methylation. Required for HUSH-mediated heterochromatin formation and gene silencing. Forms a complex with MBD1 and ATF7IP that represses transcription and couples DNA methylation and histone 'Lys-9' trimethylation. Its activity is dependent on MBD1 and is heritably maintained through DNA replication by being recruited by CAF-1. SETDB1 is targeted to histone H3 by TRIM28/TIF1B, a factor recruited by KRAB zinc-finger proteins. Probably forms a corepressor complex required for activated KRAS-mediated promoter hypermethylation and transcriptional silencing of tumor suppressor genes (TSGs) or other tumor-related genes in colorectal cancer (CRC) cells. Required to maintain a transcriptionally repressive state of genes in undifferentiated embryonic stem cells (ESCs). In ESCs, in collaboration with TRIM28, is also required for H3K9me3 and silencing of endogenous and introduced retroviruses in a DNA-methylation independent-pathway. Associates at promoter regions of tumor suppressor genes (TSGs) leading to their gene silencing. The SETDB1-TRIM28-ZNF274 complex may play a role in recruiting ATRX to the 3'-exons of zinc-finger coding genes with atypical chromatin signatures to establish or maintain/protect H3K9me3 at these transcriptionally active regions. This Homo sapiens (Human) protein is Histone-lysine N-methyltransferase SETDB1.